The following is a 136-amino-acid chain: MGKFMKPGKVVMVLAGRYAGRKAVIVKNIDDGTADRPYSHALVAGIDRYPRKVTATMGKKKIAKRSKIKAFVKVFNYNHLMPTRYSVDIPLDKTVVNKDVFRDPALKRKARREAKVKFEERYKTGKNKWFFQKLRF.

One can recognise a KOW domain in the interval 5-40 (MKPGKVVMVLAGRYAGRKAVIVKNIDDGTADRPYSH).

It belongs to the eukaryotic ribosomal protein eL27 family. As to quaternary structure, component of the large ribosomal subunit.

Its subcellular location is the cytoplasm. The protein localises to the cytosol. It is found in the rough endoplasmic reticulum. Component of the large ribosomal subunit. The sequence is that of Large ribosomal subunit protein eL27 (rpl27) from Danio rerio (Zebrafish).